The primary structure comprises 186 residues: Elongation factor P (186 aa).

It belongs to the elongation factor P family.

It localises to the cytoplasm. It participates in protein biosynthesis; polypeptide chain elongation. Functionally, involved in peptide bond synthesis. Stimulates efficient translation and peptide-bond synthesis on native or reconstituted 70S ribosomes in vitro. Probably functions indirectly by altering the affinity of the ribosome for aminoacyl-tRNA, thus increasing their reactivity as acceptors for peptidyl transferase. The chain is Elongation factor P from Maridesulfovibrio salexigens (strain ATCC 14822 / DSM 2638 / NCIMB 8403 / VKM B-1763) (Desulfovibrio salexigens).